Here is a 587-residue protein sequence, read N- to C-terminus: RuBisCO large subunit-binding protein subunit alpha, chloroplastic (587 aa).

Residues 1-25 show a composition bias toward polar residues; sequence MASTNALSSTSILRSPTNQAQTSLS. A disordered region spans residues 1 to 33; sequence MASTNALSSTSILRSPTNQAQTSLSKKVKQHGR. Residues 1–47 constitute a chloroplast transit peptide; it reads MASTNALSSTSILRSPTNQAQTSLSKKVKQHGRVNFRQKPNRFVVKA.

Belongs to the chaperonin (HSP60) family. As to quaternary structure, oligomer of probably six alpha and six beta subunits.

The protein localises to the plastid. Its subcellular location is the chloroplast. This protein binds RuBisCO small and large subunits and is implicated in the assembly of the enzyme oligomer. The polypeptide is RuBisCO large subunit-binding protein subunit alpha, chloroplastic (Pisum sativum (Garden pea)).